Consider the following 441-residue polypeptide: Amino-acid acetyltransferase (441 aa).

The N-acetyltransferase domain maps to 295-434 (EQIRRANIND…QALYNYQRRS (140 aa)).

This sequence belongs to the acetyltransferase family. ArgA subfamily. As to quaternary structure, homohexamer.

The protein localises to the cytoplasm. It catalyses the reaction L-glutamate + acetyl-CoA = N-acetyl-L-glutamate + CoA + H(+). It functions in the pathway amino-acid biosynthesis; L-arginine biosynthesis; N(2)-acetyl-L-ornithine from L-glutamate: step 1/4. The polypeptide is Amino-acid acetyltransferase (Edwardsiella ictaluri (strain 93-146)).